Here is a 662-residue protein sequence, read N- to C-terminus: Transketolase (662 aa).

Histidine 28 contributes to the substrate binding site. Thiamine diphosphate contacts are provided by residues histidine 68 and 115–117 (GPL). Residue aspartate 156 participates in Mg(2+) binding. Glycine 157 and asparagine 186 together coordinate thiamine diphosphate. Mg(2+) contacts are provided by asparagine 186 and isoleucine 188. Histidine 261, arginine 356, and serine 383 together coordinate substrate. Histidine 261 contacts thiamine diphosphate. Catalysis depends on glutamate 410, which acts as the Proton donor. Phenylalanine 436 contacts thiamine diphosphate. Histidine 460, aspartate 468, and arginine 519 together coordinate substrate.

It belongs to the transketolase family. Homodimer. Requires Mg(2+) as cofactor. Ca(2+) serves as cofactor. It depends on Mn(2+) as a cofactor. The cofactor is Co(2+). Thiamine diphosphate is required as a cofactor.

The catalysed reaction is D-sedoheptulose 7-phosphate + D-glyceraldehyde 3-phosphate = aldehydo-D-ribose 5-phosphate + D-xylulose 5-phosphate. It participates in carbohydrate biosynthesis; Calvin cycle. It functions in the pathway carbohydrate degradation; pentose phosphate pathway. In terms of biological role, catalyzes the transfer of a two-carbon ketol group from a ketose donor to an aldose acceptor, via a covalent intermediate with the cofactor thiamine pyrophosphate. This Staphylococcus aureus (strain COL) protein is Transketolase (tkt).